Reading from the N-terminus, the 360-residue chain is Ferredoxin--NADP reductase, leaf isozyme, chloroplastic (360 aa).

Residues 1–52 constitute a chloroplast transit peptide; it reads MAAAVTAAVSLPYSNSTSLPIRTSIVAPERLVFKKVSLNNVSISGRVGTIRA. An FAD-binding FR-type domain is found at 81–203; it reads KEPYVGRCLL…TGPVGKEMLM (123 aa). Residues 139–142, 160–162, Y166, 177–179, and T218 each bind FAD; these read RLYS, CVK, and VCS. 2 residues coordinate NADP(+): S142 and K162. Residues T218, 250–251, 280–281, K290, 319–320, and E358 each bind NADP(+); these read VP, SR, and GL.

It belongs to the ferredoxin--NADP reductase type 1 family. Monomer. Interacts with TIC62 (via C-terminus). The cofactor is FAD.

It localises to the plastid. It is found in the chloroplast stroma. The protein localises to the chloroplast thylakoid membrane. The catalysed reaction is 2 reduced [2Fe-2S]-[ferredoxin] + NADP(+) + H(+) = 2 oxidized [2Fe-2S]-[ferredoxin] + NADPH. Its pathway is energy metabolism; photosynthesis. Functionally, may play a key role in regulating the relative amounts of cyclic and non-cyclic electron flow to meet the demands of the plant for ATP and reducing power. The polypeptide is Ferredoxin--NADP reductase, leaf isozyme, chloroplastic (PETH) (Pisum sativum (Garden pea)).